A 659-amino-acid chain; its full sequence is MKPVMPHAQLDWDDQGRPRSRVFDDVYFSDQSGLDETRYVFLEQNRLAERFAALSAGGRLVIGETGFGTGLNFLCAWQLFEQHAVAGARLHFVSVEKFPLSPADLQRALALWPDLKRFSDQLLKHYVAIHQGFQRIVLDNGRITLTLLIGDALEQLPQLDGQIDAWFLDGFAPAKNPEMWTAELFAELARLAAPGSTISTFTSTGWVRRLLNAAGFKMKRTPGIGHKWEILRGEFLGWPEGVAPPAAAKPWFARPTRLTGDRRALVIGAGLAGCATAASLAARGWQVSLLERHDAVAQEASGNPQGVLYLKLSAHGTALSQLIVSGFGYTRRVLETLQRGTDWDDCGVLQLAFNEKERERQAQLASAFPEDLLQWLDQPEAQARAGVGLAHGGLYYPEGGWVHPPALCQAQSAQPGVTLLPHQEAVELRKVGDQWQAFDGERLIATAPVVVLAGAAEIKRFAQSGELPLKRIRGQITRLAQTAQSQALATVVCAEGYVAPARWGEHTLGASFDFSSDDLTPTTAEHLGNLAMLEEISTDLVARLHVSERDAESLQGRAAFRCTSPDYLPMVGPLADREAFTRIYAALSKDARQVPDMPCPWLDGLYVNSGHGSRGLITAPLSGELLAAWLDNEPLPLPRSVAEACHPNRFALRRLIRGK.

The tract at residues 1–236 (MKPVMPHAQL…KWEILRGEFL (236 aa)) is tRNA (mnm(5)s(2)U34)-methyltransferase. Positions 267 to 659 (IGAGLAGCAT…FALRRLIRGK (393 aa)) are FAD-dependent cmnm(5)s(2)U34 oxidoreductase.

It in the N-terminal section; belongs to the methyltransferase superfamily. tRNA (mnm(5)s(2)U34)-methyltransferase family. The protein in the C-terminal section; belongs to the DAO family. Requires FAD as cofactor.

Its subcellular location is the cytoplasm. The catalysed reaction is 5-aminomethyl-2-thiouridine(34) in tRNA + S-adenosyl-L-methionine = 5-methylaminomethyl-2-thiouridine(34) in tRNA + S-adenosyl-L-homocysteine + H(+). Functionally, catalyzes the last two steps in the biosynthesis of 5-methylaminomethyl-2-thiouridine (mnm(5)s(2)U) at the wobble position (U34) in tRNA. Catalyzes the FAD-dependent demodification of cmnm(5)s(2)U34 to nm(5)s(2)U34, followed by the transfer of a methyl group from S-adenosyl-L-methionine to nm(5)s(2)U34, to form mnm(5)s(2)U34. The chain is tRNA 5-methylaminomethyl-2-thiouridine biosynthesis bifunctional protein MnmC from Pseudomonas fluorescens (strain Pf0-1).